We begin with the raw amino-acid sequence, 314 residues long: L-lactate dehydrogenase 2 (314 aa).

NAD(+) contacts are provided by residues Val16, Asp37, Lys42, Tyr68, and 82–83 (GV). Substrate contacts are provided by Gln85 and Arg91. NAD(+) is bound by residues Ser104, 121 to 123 (ASN), and Thr146. 123–126 (NPVD) contacts substrate. 151 to 154 (DTTR) contributes to the substrate binding site. Beta-D-fructose 1,6-bisphosphate-binding residues include Arg156 and His171. His178 serves as the catalytic Proton acceptor. Tyr223 is modified (phosphotyrosine). Thr232 lines the substrate pocket.

The protein belongs to the LDH/MDH superfamily. LDH family. In terms of assembly, homotetramer.

The protein resides in the cytoplasm. The enzyme catalyses (S)-lactate + NAD(+) = pyruvate + NADH + H(+). Its pathway is fermentation; pyruvate fermentation to lactate; (S)-lactate from pyruvate: step 1/1. Its activity is regulated as follows. Allosterically activated by fructose 1,6-bisphosphate (FBP). Functionally, catalyzes the conversion of lactate to pyruvate. This is L-lactate dehydrogenase 2 from Lactococcus lactis subsp. lactis (strain IL1403) (Streptococcus lactis).